Here is a 556-residue protein sequence, read N- to C-terminus: Formate--tetrahydrofolate ligase 1 (556 aa).

An ATP-binding site is contributed by 65 to 72 (TPAGEGKS).

The protein belongs to the formate--tetrahydrofolate ligase family.

The catalysed reaction is (6S)-5,6,7,8-tetrahydrofolate + formate + ATP = (6R)-10-formyltetrahydrofolate + ADP + phosphate. It participates in one-carbon metabolism; tetrahydrofolate interconversion. The sequence is that of Formate--tetrahydrofolate ligase 1 from Streptococcus pyogenes serotype M28 (strain MGAS6180).